An 87-amino-acid polypeptide reads, in one-letter code: UPF0250 protein ECA1299 (87 aa).

This sequence belongs to the UPF0250 family.

This Pectobacterium atrosepticum (strain SCRI 1043 / ATCC BAA-672) (Erwinia carotovora subsp. atroseptica) protein is UPF0250 protein ECA1299.